The sequence spans 136 residues: Large ribosomal subunit protein uL16 (136 aa).

Belongs to the universal ribosomal protein uL16 family. Part of the 50S ribosomal subunit.

Functionally, binds 23S rRNA and is also seen to make contacts with the A and possibly P site tRNAs. The protein is Large ribosomal subunit protein uL16 of Rickettsia rickettsii (strain Iowa).